Here is an 824-residue protein sequence, read N- to C-terminus: Leucine--tRNA ligase (824 aa).

Positions 42-52 match the 'HIGH' region motif; that stretch reads PYPSGKIHMGH. The short motif at 581–585 is the 'KMSKS' region element; the sequence is KMSKS. Residue Lys584 coordinates ATP.

Belongs to the class-I aminoacyl-tRNA synthetase family.

It localises to the cytoplasm. The catalysed reaction is tRNA(Leu) + L-leucine + ATP = L-leucyl-tRNA(Leu) + AMP + diphosphate. This chain is Leucine--tRNA ligase, found in Citrifermentans bemidjiense (strain ATCC BAA-1014 / DSM 16622 / JCM 12645 / Bem) (Geobacter bemidjiensis).